A 422-amino-acid chain; its full sequence is UDP-N-acetylglucosamine 1-carboxyvinyltransferase (422 aa).

23 to 24 (KN) contributes to the phosphoenolpyruvate binding site. A UDP-N-acetyl-alpha-D-glucosamine-binding site is contributed by R92. Catalysis depends on C116, which acts as the Proton donor. C116 is modified (2-(S-cysteinyl)pyruvic acid O-phosphothioketal). Residues 121–125 (RPVDL), 161–165 (KVSVG), D306, and I328 each bind UDP-N-acetyl-alpha-D-glucosamine.

Belongs to the EPSP synthase family. MurA subfamily.

The protein localises to the cytoplasm. The catalysed reaction is phosphoenolpyruvate + UDP-N-acetyl-alpha-D-glucosamine = UDP-N-acetyl-3-O-(1-carboxyvinyl)-alpha-D-glucosamine + phosphate. It participates in cell wall biogenesis; peptidoglycan biosynthesis. Cell wall formation. Adds enolpyruvyl to UDP-N-acetylglucosamine. This chain is UDP-N-acetylglucosamine 1-carboxyvinyltransferase, found in Aliivibrio fischeri (strain MJ11) (Vibrio fischeri).